The chain runs to 1204 residues: Exportin-5 (1204 aa).

The residue at position 2 (alanine 2) is an N-acetylalanine. Residues 2-108 (AMDQVNALCE…ANGTLNILEE (107 aa)) are necessary for interaction with Ran. Lysine 396 carries the N6-acetyllysine modification. Residues 533–640 (ELLQMVLNFD…KQLLSNELLL (108 aa)) form a necessary for interaction with ILF3 region. Residues 641 to 642 (TQ) are pre-miRNA binding. Serine 826 is subject to Phosphoserine.

The protein belongs to the exportin family. As to quaternary structure, component of a nuclear export receptor complex composed of XPO5, RAN, dsRNA-binding proteins and dsRNA. Found in a nuclear export complex with XPO5, RAN, EEF1A1, and aminoacylated tRNA. Found in a nuclear export complex with XPO5, RAN, ILF3 and dsRNA. Found in a nuclear export complex with XPO5, RAN and pre-miRNA. Found in a nuclear export complex with XPO5, RAN, ILF3 and minihelix VA1 dsRNA. Found in a nuclear export complex with XPO5, RAN, ILF3, ZNF346 and dsRNA. Interacts with EEF1A1, ILF3, NUP153, NUP214 and ZNF346. Interacts with RAN and cargo proteins in a GTP-dependent manner. Interacts with isoform 5 of ADAR/ADAR1 (via DRBM domains). Interacts with SMAD4; mediates nuclear export of SMAD4. Interacts with RAN (GTP-bound form). In terms of tissue distribution, expressed in heart, brain, placenta, lung, skeletal muscle, kidney and pancreas.

It is found in the nucleus. Its subcellular location is the cytoplasm. Functionally, mediates the nuclear export of proteins bearing a double-stranded RNA binding domain (dsRBD) and double-stranded RNAs (cargos). XPO5 in the nucleus binds cooperatively to the RNA and to the GTPase Ran in its active GTP-bound form. Proteins containing dsRBDs can associate with this trimeric complex through the RNA. Docking of this complex to the nuclear pore complex (NPC) is mediated through binding to nucleoporins. Upon transit of a nuclear export complex into the cytoplasm, hydrolysis of Ran-GTP to Ran-GDP (induced by RANBP1 and RANGAP1, respectively) cause disassembly of the complex and release of the cargo from the export receptor. XPO5 then returns to the nuclear compartment by diffusion through the nuclear pore complex, to mediate another round of transport. The directionality of nuclear export is thought to be conferred by an asymmetric distribution of the GTP- and GDP-bound forms of Ran between the cytoplasm and nucleus. Overexpression may in some circumstances enhance RNA-mediated gene silencing (RNAi). Mediates nuclear export of isoform 5 of ADAR/ADAR1 in a RanGTP-dependent manner. In terms of biological role, mediates the nuclear export of micro-RNA precursors, which form short hairpins. Also mediates the nuclear export of synthetic short hairpin RNAs used for RNA interference. In some circumstances can also mediate the nuclear export of deacylated and aminoacylated tRNAs. Specifically recognizes dsRNAs that lack a 5'-overhang in a sequence-independent manner, have only a short 3'-overhang, and that have a double-stranded length of at least 15 base-pairs. Binding is dependent on Ran-GTP. (Microbial infection) Mediates the nuclear export of adenovirus VA1 dsRNA. This is Exportin-5 (XPO5) from Homo sapiens (Human).